Consider the following 411-residue polypeptide: BRO1 domain-containing protein BROX (411 aa).

Residues 90–395 enclose the BRO1 domain; the sequence is FKWTDTLQGN…PKKEEEVKPM (306 aa). A disordered region spans residues 362–411; it reads TSQWSPETHTGFDLTKRPKDDSAKPKKEEEVKPMKEPDIKPQKDSGCQIS. The span at 375–404 shows a compositional bias: basic and acidic residues; it reads LTKRPKDDSAKPKKEEEVKPMKEPDIKPQK. Residue Cys408 is modified to Cysteine methyl ester. Residue Cys408 is the site of S-farnesyl cysteine attachment. Positions 409–411 are cleaved as a propeptide — removed in mature form; that stretch reads QIS.

The protein belongs to the BROX family. In terms of processing, farnesylation is required for nuclear envelope localization.

It localises to the nucleus membrane. Nuclear envelope-associated factor that is involved in the nuclear envelope ruptures during interphase (NERDI) repair. This Xenopus tropicalis (Western clawed frog) protein is BRO1 domain-containing protein BROX.